Reading from the N-terminus, the 413-residue chain is Putative ankyrin repeat protein L92 (413 aa).

8 ANK repeats span residues 1 to 28, 32 to 67, 68 to 104, 105 to 134, 137 to 170, 174 to 208, 212 to 242, and 246 to 275; these read MCAC…DINC, DGMS…DVNL, TVDG…LFES, DDDD…NIEA, DGET…KTNI, DRKT…NINY, IGET…NPNI, and SGNT…SPEI.

This is Putative ankyrin repeat protein L92 from Acanthamoeba polyphaga mimivirus (APMV).